We begin with the raw amino-acid sequence, 422 residues long: Vitamin D3 receptor B (422 aa).

A DNA-binding region (nuclear receptor) is located at residues 20–95 (PRICGVCGDK…IGMMKEFILT (76 aa)). Zn(2+) is bound by residues cysteine 23, cysteine 26, cysteine 40, cysteine 43, cysteine 59, cysteine 65, cysteine 75, and cysteine 78. NR C4-type zinc fingers lie at residues 23 to 43 (CGVCGDKATGFHFNAMTCEGC) and 59 to 78 (CPFNGSCTITKDNRRHCQAC). A hinge region spans residues 96–125 (DEEVQRKKELIQRRKDEEAHREAQKPRLSD). The interval 106–128 (IQRRKDEEAHREAQKPRLSDEQR) is disordered. The NR LBD domain occupies 126-418 (EQRNIIDTLV…LTPLVLEVFG (293 aa)). Residue tyrosine 142 participates in calcitriol binding. The segment at 145–190 (SYSDFSRFRPPVREGPVTRSASRAASLHSLSDASSDSFSHSPESGD) is disordered. Positions 163 to 185 (RSASRAASLHSLSDASSDSFSHS) are enriched in low complexity. Calcitriol is bound at residue serine 234. Residues 243-261 (KMIPGFRELTAEDQIALLK) are interaction with coactivator LXXLL motif. Calcitriol-binding residues include arginine 271, serine 275, histidine 302, and histidine 392. The 9aaTAD signature appears at 411–419 (PLVLEVFGG).

The protein belongs to the nuclear hormone receptor family. As to quaternary structure, homodimer in the absence of bound vitamin D3. Heterodimer with RXRA after vitamin D3 binding. Interacts with ncoa1 and possibly other coactivators, leading to a strong increase of transcription of target genes. Detected in embryo 24 to 48 hours after fertilization, and in intestinal bulb.

Its subcellular location is the nucleus. It is found in the cytoplasm. In terms of biological role, nuclear receptor for calcitriol, the active form of vitamin D3 which mediates the action of this vitamin on cells. Enters the nucleus upon vitamin D3 binding where it forms heterodimers with the retinoid X receptor/RXR. The VDR-RXR heterodimers bind to specific response elements on DNA and activate the transcription of vitamin D3-responsive target genes. Recruited to promoters via its interaction with BAZ1B/WSTF which mediates the interaction with acetylated histones, an essential step for VDR-promoter association. Plays a central role in calcium homeostasis. This chain is Vitamin D3 receptor B (vdrb), found in Danio rerio (Zebrafish).